The following is a 689-amino-acid chain: Bifunctional protein GAL10 (689 aa).

The tract at residues 1-345 (MSYILVTGGA…TTKNPFGFQI (345 aa)) is galactowaldenase. An NAD(+)-binding site is contributed by 3–34 (YILVTGGAGYIGSHTVVELVNNGYNVVVVDNL). A mutarotase region spans residues 346–689 (NNYSWTKFDS…SYTIYRFENF (344 aa)). Residue His534 is the For mutarotase activity of the active site.

In the N-terminal section; belongs to the NAD(P)-dependent epimerase/dehydratase family. This sequence in the C-terminal section; belongs to the aldose epimerase family. It depends on NAD(+) as a cofactor.

The enzyme catalyses UDP-alpha-D-glucose = UDP-alpha-D-galactose. It catalyses the reaction alpha-D-glucose = beta-D-glucose. It functions in the pathway carbohydrate metabolism; galactose metabolism. The protein operates within carbohydrate metabolism; hexose metabolism. In terms of biological role, mutarotase converts alpha-aldose to the beta-anomer. It is active on D-glucose, L-arabinose, D-xylose, D-galactose, maltose and lactose. The chain is Bifunctional protein GAL10 (GAL10) from Pachysolen tannophilus (Yeast).